The chain runs to 183 residues: Apo-citrate lyase phosphoribosyl-dephospho-CoA transferase (183 aa).

It belongs to the CitX family.

It catalyses the reaction apo-[citrate lyase ACP] + 2'-(5''-triphospho-alpha-D-ribosyl)-3'-dephospho-CoA = holo-[citrate lyase ACP] + diphosphate. Functionally, transfers 2-(5''-triphosphoribosyl)-3'-dephosphocoenzyme-A on a serine residue to the apo-acyl carrier protein (gamma chain) of the citrate lyase to yield holo-acyl carrier protein. The polypeptide is Apo-citrate lyase phosphoribosyl-dephospho-CoA transferase (Escherichia coli O45:K1 (strain S88 / ExPEC)).